The primary structure comprises 360 residues: MKNIFLHSLSLENYRNFKNLELKTDNTPIILIGENGSGKTNILEAISLFYPGRGLRSAKLADICKTSEDHCLVKALLQSKLGLAEFTTQFKRSSNRRITEYNESKIANNELSKFTSMVWLTPHMEGIFTSSSSDRRKFLDRIVYNFDPKHTELVSKYEYYMHERNKILVEDIRDDNWLKIIEEKMADISNHIANNRLKTLEFMQHAIDDLENEFPKADLSIDGIVEQKILNGEENIVSFITAELYQTRNNDKLLGRTSFGVHKSDFLVKHQKKNILAKFCSTGEQKAILIAIILAEMNYAIKLTKIAPILLLDEVFVHLDDKRRQYLIEFFTGLNMQLWVTTTNLEGIENFATKAQLIKL.

Gly33–Thr40 contacts ATP.

This sequence belongs to the RecF family.

It localises to the cytoplasm. In terms of biological role, the RecF protein is involved in DNA metabolism; it is required for DNA replication and normal SOS inducibility. RecF binds preferentially to single-stranded, linear DNA. It also seems to bind ATP. The chain is DNA replication and repair protein RecF from Rickettsia massiliae (strain Mtu5).